A 328-amino-acid chain; its full sequence is Malate dehydrogenase (328 aa).

11-17 (GAAGQIG) is an NAD(+) binding site. Substrate-binding residues include R92 and R98. Residues N105, Q112, and 129–131 (VGN) contribute to the NAD(+) site. Residues N131 and R162 each coordinate substrate. Residue H187 is the Proton acceptor of the active site.

Belongs to the LDH/MDH superfamily. MDH type 2 family.

The enzyme catalyses (S)-malate + NAD(+) = oxaloacetate + NADH + H(+). Functionally, catalyzes the reversible oxidation of malate to oxaloacetate. The protein is Malate dehydrogenase of Coxiella burnetii (strain CbuG_Q212) (Coxiella burnetii (strain Q212)).